The primary structure comprises 215 residues: Octanoyltransferase (215 aa).

In terms of domain architecture, BPL/LPL catalytic spans 31–206; that stretch reads TSAEDEIWLV…QLVKHLDYAE (176 aa). Substrate is bound by residues 70–77, 137–139, and 150–152; these read RGGQVTYH, SLG, and GLA. C168 serves as the catalytic Acyl-thioester intermediate.

The protein belongs to the LipB family.

It is found in the cytoplasm. It catalyses the reaction octanoyl-[ACP] + L-lysyl-[protein] = N(6)-octanoyl-L-lysyl-[protein] + holo-[ACP] + H(+). Its pathway is protein modification; protein lipoylation via endogenous pathway; protein N(6)-(lipoyl)lysine from octanoyl-[acyl-carrier-protein]: step 1/2. In terms of biological role, catalyzes the transfer of endogenously produced octanoic acid from octanoyl-acyl-carrier-protein onto the lipoyl domains of lipoate-dependent enzymes. Lipoyl-ACP can also act as a substrate although octanoyl-ACP is likely to be the physiological substrate. In Pseudomonas fluorescens (strain SBW25), this protein is Octanoyltransferase.